Consider the following 336-residue polypeptide: Inositol 2-dehydrogenase (336 aa).

This sequence belongs to the Gfo/Idh/MocA family. In terms of assembly, homotetramer.

The catalysed reaction is myo-inositol + NAD(+) = scyllo-inosose + NADH + H(+). In terms of biological role, involved in the oxidation of myo-inositol (MI) to 2-keto-myo-inositol (2KMI or 2-inosose). In Acidiphilium cryptum (strain JF-5), this protein is Inositol 2-dehydrogenase.